Reading from the N-terminus, the 262-residue chain is UDP-2,3-diacylglucosamine hydrolase (262 aa).

The Mn(2+) site is built by Asp10, His12, Asp47, Asn86, His121, His218, and His220.

This sequence belongs to the LpxH family. It depends on Mn(2+) as a cofactor.

Its subcellular location is the cell inner membrane. It is found in the cytoplasm. The catalysed reaction is UDP-2-N,3-O-bis[(3R)-3-hydroxytetradecanoyl]-alpha-D-glucosamine + H2O = 2-N,3-O-bis[(3R)-3-hydroxytetradecanoyl]-alpha-D-glucosaminyl 1-phosphate + UMP + 2 H(+). The protein operates within glycolipid biosynthesis; lipid IV(A) biosynthesis; lipid IV(A) from (3R)-3-hydroxytetradecanoyl-[acyl-carrier-protein] and UDP-N-acetyl-alpha-D-glucosamine: step 4/6. Functionally, hydrolyzes the pyrophosphate bond of UDP-2,3-diacylglucosamine to yield 2,3-diacylglucosamine 1-phosphate (lipid X) and UMP by catalyzing the attack of water at the alpha-P atom. Involved in the biosynthesis of lipid A, a phosphorylated glycolipid that anchors the lipopolysaccharide to the outer membrane of the cell. This chain is UDP-2,3-diacylglucosamine hydrolase, found in Porphyromonas gingivalis (strain ATCC BAA-308 / W83).